The primary structure comprises 222 residues: Thiol:disulfide interchange protein DsbL (222 aa).

The first 27 residues, 1–27 (MSKLGISSLFKTILLTAALAVSFTASA), serve as a signal peptide directing secretion. Residues 28 to 221 (FTEGTDYMVL…MADLIRELAS (194 aa)) form the Thioredoxin domain. Cys-56 and Cys-59 form a disulfide bridge.

The protein belongs to the thioredoxin family. DsbL subfamily. In terms of assembly, interacts with DsbI.

It localises to the periplasm. In terms of biological role, involved in disulfide-bond formation. Acts by transferring its disulfide bond to other proteins. Part of a redox system composed of DsbI and DsbL that mediates formation of an essential disulfide bond in AssT. The protein is Thiol:disulfide interchange protein DsbL of Escherichia coli O6:H1 (strain CFT073 / ATCC 700928 / UPEC).